A 356-amino-acid chain; its full sequence is Histidinol-phosphate aminotransferase (356 aa).

Lys208 carries the N6-(pyridoxal phosphate)lysine modification.

The protein belongs to the class-II pyridoxal-phosphate-dependent aminotransferase family. Histidinol-phosphate aminotransferase subfamily. Homodimer. The cofactor is pyridoxal 5'-phosphate.

The catalysed reaction is L-histidinol phosphate + 2-oxoglutarate = 3-(imidazol-4-yl)-2-oxopropyl phosphate + L-glutamate. Its pathway is amino-acid biosynthesis; L-histidine biosynthesis; L-histidine from 5-phospho-alpha-D-ribose 1-diphosphate: step 7/9. The chain is Histidinol-phosphate aminotransferase from Lactococcus lactis subsp. cremoris (strain SK11).